The primary structure comprises 176 residues: Methylated-DNA--protein-cysteine methyltransferase (176 aa).

Cys-142 (nucleophile; methyl group acceptor) is an active-site residue.

Belongs to the MGMT family.

It is found in the cytoplasm. It carries out the reaction a 6-O-methyl-2'-deoxyguanosine in DNA + L-cysteinyl-[protein] = S-methyl-L-cysteinyl-[protein] + a 2'-deoxyguanosine in DNA. The enzyme catalyses a 4-O-methyl-thymidine in DNA + L-cysteinyl-[protein] = a thymidine in DNA + S-methyl-L-cysteinyl-[protein]. Involved in the cellular defense against the biological effects of O6-methylguanine (O6-MeG) and O4-methylthymine (O4-MeT) in DNA. Repairs the methylated nucleobase in DNA by stoichiometrically transferring the methyl group to a cysteine residue in the enzyme. This is a suicide reaction: the enzyme is irreversibly inactivated. This chain is Methylated-DNA--protein-cysteine methyltransferase, found in Methanothermobacter thermautotrophicus (strain ATCC 29096 / DSM 1053 / JCM 10044 / NBRC 100330 / Delta H) (Methanobacterium thermoautotrophicum).